The chain runs to 328 residues: 4-hydroxythreonine-4-phosphate dehydrogenase (328 aa).

Residues His130 and Thr131 each coordinate substrate. Residues His163, His208, and His263 each contribute to the a divalent metal cation site. The substrate site is built by Lys271, Asn280, and Arg289.

Belongs to the PdxA family. In terms of assembly, homodimer. Zn(2+) is required as a cofactor. The cofactor is Mg(2+). It depends on Co(2+) as a cofactor.

The protein localises to the cytoplasm. It catalyses the reaction 4-(phosphooxy)-L-threonine + NAD(+) = 3-amino-2-oxopropyl phosphate + CO2 + NADH. It functions in the pathway cofactor biosynthesis; pyridoxine 5'-phosphate biosynthesis; pyridoxine 5'-phosphate from D-erythrose 4-phosphate: step 4/5. Its function is as follows. Catalyzes the NAD(P)-dependent oxidation of 4-(phosphooxy)-L-threonine (HTP) into 2-amino-3-oxo-4-(phosphooxy)butyric acid which spontaneously decarboxylates to form 3-amino-2-oxopropyl phosphate (AHAP). This chain is 4-hydroxythreonine-4-phosphate dehydrogenase, found in Burkholderia vietnamiensis (strain G4 / LMG 22486) (Burkholderia cepacia (strain R1808)).